A 1217-amino-acid chain; its full sequence is ATP-dependent helicase/nuclease subunit A (1217 aa).

The 466-residue stretch at 10-475 (VIWTDAQWQS…IDLSQNFRSR (466 aa)) folds into the UvrD-like helicase ATP-binding domain. 31-38 (AAAGSGKT) provides a ligand contact to ATP. In terms of domain architecture, UvrD-like helicase C-terminal spans 476–786 (KEVLSTTNYI…RMMTIHSSKG (311 aa)).

It belongs to the helicase family. AddA subfamily. As to quaternary structure, heterodimer of AddA and AddB/RexB. Mg(2+) is required as a cofactor.

It carries out the reaction Couples ATP hydrolysis with the unwinding of duplex DNA by translocating in the 3'-5' direction.. It catalyses the reaction ATP + H2O = ADP + phosphate + H(+). In terms of biological role, the heterodimer acts as both an ATP-dependent DNA helicase and an ATP-dependent, dual-direction single-stranded exonuclease. Recognizes the chi site generating a DNA molecule suitable for the initiation of homologous recombination. The AddA nuclease domain is required for chi fragment generation; this subunit has the helicase and 3' -&gt; 5' nuclease activities. The protein is ATP-dependent helicase/nuclease subunit A of Staphylococcus aureus (strain Mu3 / ATCC 700698).